The primary structure comprises 267 residues: Small ribosomal subunit protein uS2c (267 aa).

The segment at 237-267 is disordered; sequence KQKIKKTGVKISGNRRTSSITKKRNPASSKI. Residues 250–267 show a composition bias toward polar residues; it reads NRRTSSITKKRNPASSKI.

The protein belongs to the universal ribosomal protein uS2 family.

The protein localises to the plastid. Its subcellular location is the chloroplast. This chain is Small ribosomal subunit protein uS2c (rps2), found in Chlorella vulgaris (Green alga).